We begin with the raw amino-acid sequence, 172 residues long: Translationally-controlled tumor protein homolog (172 aa).

In terms of domain architecture, TCTP spans M1 to C172.

This sequence belongs to the TCTP family.

The protein localises to the cytoplasm. Its function is as follows. Involved in calcium binding and microtubule stabilization. The sequence is that of Translationally-controlled tumor protein homolog (tpt1) from Xenopus laevis (African clawed frog).